Reading from the N-terminus, the 312-residue chain is Plasminogen activator (312 aa).

Residues 1–20 (MKKSSIVATIITILSGSANA) form the signal peptide. The Periplasmic portion of the chain corresponds to 21 to 31 (ASSQLIPNISP). A beta stranded membrane pass occupies residues 32-40 (DSFTVAAST). The Extracellular portion of the chain corresponds to 41–70 (GMLSGKSHEMLYDAETGRKISQLDWKIKNV). The chain crosses the membrane as a beta stranded span at residues 71 to 80 (AILKGDISWD). Residues 81–84 (PYSF) are Periplasmic-facing. A beta stranded transmembrane segment spans residues 85–94 (LTLNARGWTS). The Extracellular portion of the chain corresponds to 95–131 (LASGSGNMDDYDWMNENQSEWTDHSSHPATNVNHANE). Active-site residues include Asp-104 and Asp-106. Residues 132–140 (YDLNVKGWL) traverse the membrane as a beta stranded segment. At 141–145 (LQDEN) the chain is on the periplasmic side. A beta stranded transmembrane segment spans residues 146–154 (YKAGITAGY). The Extracellular segment spans residues 155 to 194 (QETRFSWTATGGSYSYNNGAYTGNFPKGVRVIGYNQRFSM). The chain crosses the membrane as a beta stranded span at residues 195-204 (PYIGLAGQYR). Residues 205–207 (IND) lie on the Periplasmic side of the membrane. The beta stranded transmembrane segment at 208–216 (FELNALFKF) threads the bilayer. At 217–244 (SDWVRAHDNDEHYMRDLTFREKTSGSRY) the chain is on the extracellular side. Active-site residues include Asp-226 and His-228. The beta stranded transmembrane segment at 245–255 (YGTVINAGYYV) threads the bilayer. Over 256-258 (TPN) the chain is Periplasmic. A beta stranded membrane pass occupies residues 259–267 (AKVFAEFTY). Over 268–301 (SKYDEGKGGTQTIDKNSGDSVSIGGDAAGISNKN) the chain is Extracellular. The chain crosses the membrane as a beta stranded span at residues 302 to 312 (YTVTAGLQYRF).

It belongs to the peptidase A26 family.

The protein resides in the cell outer membrane. The catalysed reaction is Converts human Glu-plasminogen to plasmin by cleaving the 560-Arg-|-Val-561 peptide bond that is also hydrolyzed by the mammalian u-plasminogen activator and t-plasminogen activator. Also cleaves arginyl bonds in other proteins.. Its activity is regulated as follows. Requires bacterial lipopolysaccharide (LPS) for activation; addition of LPS to inactive protein reactivates it. In the absence of LPS the active site groove is slightly narrower, and peptide substrate binds deep within the active site groove, displacing the nucleophilic water molecule. Functionally, in the mammalian host activates (cleaves) plasminogen to generate the serine protease plasmin. Plasmin degrades fibrin clots (fibrinolysis) and facilitates bacterial cell migration, enabling rapid dissemination of bacteria from the initial site of infection. Cleaves host plasminogen to generate plasmin and probably also has autocatalytic activity. Fibrinolytic activity prevails at 37 degrees Celsius whereas coagulase expression predominates at lower temperatures (28 degrees Celsius). Cleaves plasminogen; plasminogen cleavage is much higher than coagulase activity. The chain is Plasminogen activator from Yersinia pestis.